Consider the following 395-residue polypeptide: Endophilin-B2 (395 aa).

Met1 carries the post-translational modification N-acetylmethionine. The interval 1 to 27 (MDFNMKKLASDAGIFFTRAVQFTEEKF) is membrane-binding amphipathic helix. At Ser10 the chain carries Phosphoserine. Residues 24 to 287 (EEKFGQAEKT…LGRFPGTFVG (264 aa)) enclose the BAR domain. 2 coiled-coil regions span residues 116–132 (IKVA…ERDF) and 206–240 (ASAL…LLLE). The SH3 domain occupies 335 to 395 (SGTRKARVLY…VPVTYLELLS (61 aa)). The residue at position 395 (Ser395) is a Phosphoserine.

This sequence belongs to the endophilin family. In terms of assembly, homodimer, and heterodimer with SH3GLB1.

The protein resides in the cytoplasm. This Bos taurus (Bovine) protein is Endophilin-B2 (SH3GLB2).